Here is a 378-residue protein sequence, read N- to C-terminus: Ecotin-like protein 3 (378 aa).

2 disordered regions span residues 191 to 216 (HRLS…HAAP) and 238 to 378 (PQNN…KADP). Residues 274 to 287 (NEPSPSRPRLSSTE) show a composition bias toward polar residues. The segment covering 337 to 348 (RKAEDNVYEKTM) has biased composition (basic and acidic residues). The span at 362–378 (KASASSKKSGNGSKADP) shows a compositional bias: low complexity.

This sequence belongs to the protease inhibitor I11 (ecotin) family.

The polypeptide is Ecotin-like protein 3 (Leishmania infantum).